An 88-amino-acid chain; its full sequence is Sec-independent protein translocase protein TatA (88 aa).

The chain crosses the membrane as a helical span at residues 1–21 (MGGISIWQLLIIAVIVVLLFG). Positions 41 to 88 (KAMGDENQKETNNAEKTTNDADFDTKNLAQKTSTEEKSTTESKNKEQV) are disordered. Composition is skewed to basic and acidic residues over residues 42 to 65 (AMGDENQKETNNAEKTTNDADFDT) and 73 to 88 (STEEKSTTESKNKEQV).

The protein belongs to the TatA/E family. The Tat system comprises two distinct complexes: a TatABC complex, containing multiple copies of TatA, TatB and TatC subunits, and a separate TatA complex, containing only TatA subunits. Substrates initially bind to the TatABC complex, which probably triggers association of the separate TatA complex to form the active translocon.

The protein resides in the cell inner membrane. Its function is as follows. Part of the twin-arginine translocation (Tat) system that transports large folded proteins containing a characteristic twin-arginine motif in their signal peptide across membranes. TatA could form the protein-conducting channel of the Tat system. This is Sec-independent protein translocase protein TatA from Proteus mirabilis (strain HI4320).